The sequence spans 646 residues: Threonine--tRNA ligase (646 aa).

Residues 1–61 enclose the TGS domain; that stretch reads MIKITFPDGS…NEDADFVLYK (61 aa). Residues 242–541 are catalytic; the sequence is DHRKIGKEMQ…LIEHTAGKFP (300 aa). Zn(2+) is bound by residues Cys337, His388, and His518.

The protein belongs to the class-II aminoacyl-tRNA synthetase family. In terms of assembly, homodimer. The cofactor is Zn(2+).

It is found in the cytoplasm. The catalysed reaction is tRNA(Thr) + L-threonine + ATP = L-threonyl-tRNA(Thr) + AMP + diphosphate + H(+). Functionally, catalyzes the attachment of threonine to tRNA(Thr) in a two-step reaction: L-threonine is first activated by ATP to form Thr-AMP and then transferred to the acceptor end of tRNA(Thr). Also edits incorrectly charged L-seryl-tRNA(Thr). The polypeptide is Threonine--tRNA ligase (Bacteroides thetaiotaomicron (strain ATCC 29148 / DSM 2079 / JCM 5827 / CCUG 10774 / NCTC 10582 / VPI-5482 / E50)).